We begin with the raw amino-acid sequence, 320 residues long: Retron Ec86 reverse transcriptase (320 aa).

In terms of domain architecture, Reverse transcriptase spans 34–248 (VETLRLLIYT…SQRKVTGLVI (215 aa)). Asp119, Asp197, and Asp198 together coordinate Mg(2+). The necessary and required for recognition and binding of RNA stretch occupies residues 230–320 (KKTCISGPRS…GKNPLNKAKT (91 aa)).

The protein belongs to the bacterial reverse transcriptase family.

It carries out the reaction DNA(n) + a 2'-deoxyribonucleoside 5'-triphosphate = DNA(n+1) + diphosphate. Functionally, reverse transcriptase (RT) component of antiviral defense system retron Ec86, composed of a non-coding RNA (ncRNA), a ribosyltransferase/DNA-binding protein and this RT. Expression of the 3-gene retron confers protection against bacteriophage T5. At multiplicity of infection (MOI) of 0.02 cultures grow normally when infected with T5 without collapsing, at MOI 2 cultures enter growth stasis. Responsible for synthesis of msDNA (a branched molecule with RNA linked by a 2',5'-phosphodiester bond to ssDNA). The retron transcript serves as primer (from a conserved internal G residue) and template for the reaction, and codes for the RT. Recognizes only its cognate RNA as a primer template. Overexpression of the ncRNA and RT (without the ribosyltransferase), which leads to increased levels of msDNA, is mutagenic in vivo. This may be due to a mismatch in the msDNA stem which binds and sequesters MutS and/or MutL. The polypeptide is Retron Ec86 reverse transcriptase (Escherichia coli).